A 287-amino-acid polypeptide reads, in one-letter code: Ribosomal RNA small subunit methyltransferase A (287 aa).

Residues 1–15 (MSKTTFDAQSITNSL) are compositionally biased toward polar residues. A disordered region spans residues 1-20 (MSKTTFDAQSITNSLRAAKH). Positions 29, 31, 56, 77, and 126 each coordinate S-adenosyl-L-methionine.

It belongs to the class I-like SAM-binding methyltransferase superfamily. rRNA adenine N(6)-methyltransferase family. RsmA subfamily.

The protein localises to the cytoplasm. The enzyme catalyses adenosine(1518)/adenosine(1519) in 16S rRNA + 4 S-adenosyl-L-methionine = N(6)-dimethyladenosine(1518)/N(6)-dimethyladenosine(1519) in 16S rRNA + 4 S-adenosyl-L-homocysteine + 4 H(+). Its function is as follows. Specifically dimethylates two adjacent adenosines (A1518 and A1519) in the loop of a conserved hairpin near the 3'-end of 16S rRNA in the 30S particle. May play a critical role in biogenesis of 30S subunits. The polypeptide is Ribosomal RNA small subunit methyltransferase A (Psychrobacter cryohalolentis (strain ATCC BAA-1226 / DSM 17306 / VKM B-2378 / K5)).